The primary structure comprises 217 residues: Thymidylate kinase (217 aa).

Residue 16–23 (GIDGAGKT) participates in ATP binding.

The protein belongs to the thymidylate kinase family.

It catalyses the reaction dTMP + ATP = dTDP + ADP. Phosphorylation of dTMP to form dTDP in both de novo and salvage pathways of dTTP synthesis. The chain is Thymidylate kinase from Xylella fastidiosa (strain M23).